A 123-amino-acid chain; its full sequence is Defensin beta 118 (123 aa).

The N-terminal stretch at 1–19 (MKLLLLALPMLVLLPQVIP) is a signal peptide. Intrachain disulfides connect Cys27–Cys54, Cys34–Cys48, and Cys38–Cys55. Residues 65 to 123 (VPTTSPTPLSDSTRGVIDDILTVRFTTDYFEVSSKKNMVEESEVGQGTQTSLPNVHHSS) constitute a propeptide that is removed on maturation. A disordered region spans residues 100–123 (KNMVEESEVGQGTQTSLPNVHHSS). The span at 109-123 (GQGTQTSLPNVHHSS) shows a compositional bias: polar residues.

Belongs to the beta-defensin family. Post-translationally, the three-dimensional structure formed by the three intramolecular disulfide bridges is indispensable for antimicrobial activity.

Its subcellular location is the secreted. In terms of biological role, host defense peptide that exhibits antimicrobial activity against both Gram-negative bacteria, such as E.coli and S.typhimurium, and Gram-positive bacteria, such as S.aureus and B.subtilis. Inhibits cell adhesion of E.coli on intestinal epithelial enterocytes. Causes rapid permeabilization of both the outer and inner membrane of E.coli, leading to morphological alterations on the bacterial surface. Binds to bacterial lipopolysaccharides (LPS) with high affinity, and may thereby be involved in immunoregulation through LPS neutralization. May contribute to epididymal innate immunity and protect the sperm against attack by microorganisms. This Pongo pygmaeus (Bornean orangutan) protein is Defensin beta 118 (DEFB118).